Reading from the N-terminus, the 399-residue chain is Centrosomal protein 43 (399 aa).

In terms of domain architecture, LisH spans 70 to 102 (DGRLVASLVAEFLQFFNLDFTLAVFQPETSTLQ). Disordered regions lie at residues 139–218 (EKGP…SSLH) and 232–308 (NRTL…SESK). Residue T143 is modified to Phosphothreonine. Residues S152, S156, and S160 each carry the phosphoserine modification. Residues 163–172 (GKTSAQTTPS) are compositionally biased toward polar residues. A Phosphothreonine modification is found at T170. The segment covering 175 to 186 (PRYKGQGKKKTS) has biased composition (basic residues). A Phosphoserine modification is found at S202. Over residues 205–218 (SVSLSEPKSKSSLH) the composition is skewed to low complexity. At T234 the chain carries Phosphothreonine. Positions 245-256 (PDEDDMEGDSFF) are enriched in acidic residues. Over residues 259–275 (PIPKPEKTYGLRKEPRK) the composition is skewed to basic and acidic residues. A compositionally biased stretch (low complexity) spans 286–302 (APPLKSGLSSLAGAPSL). A phosphoserine mark is found at S301 and S326. The interval 331–353 (TGEDDDYVDDFNSTSHRSEKSEI) is disordered. Position 337 is a phosphotyrosine (Y337).

It belongs to the CEP43 family. As to quaternary structure, homodimer. Part of a ternary complex that contains CEP350, CEP43 and MAPRE1. Interacts directly with CEP350 and MAPRE1. Interacts with CEP19. Interacts (via N-terminus) with CEP350 (via C-terminus). In terms of tissue distribution, ubiquitous. Highly expressed in heart, liver, muscle, kidney, intestine, colon, adrenal gland, prostate, testis, and pancreas.

It localises to the cytoplasm. The protein resides in the cytoskeleton. It is found in the microtubule organizing center. The protein localises to the centrosome. Its subcellular location is the centriole. It localises to the cilium basal body. Functionally, required for anchoring microtubules to the centrosomes. Required for ciliation. The protein is Centrosomal protein 43 of Homo sapiens (Human).